We begin with the raw amino-acid sequence, 122 residues long: C-C motif chemokine 9 (122 aa).

Positions M1–A21 are cleaved as a signal peptide. 3 disulfides stabilise this stretch: C57–C80, C58–C96, and C67–C107.

Belongs to the intercrine beta (chemokine CC) family. In terms of processing, the N-terminal is proteolytically cleaved by proteases associated with inflammatory responses. The processed forms CCL9(29-101), CCL9(30-101) and CCL9(31-101) exhibit increase in CCR1-mediated signaling and chemotaxis assays in vitro. As to expression, expressed mainly in the liver, lung, and the thymus, although some expression has been detected in a wide variety of tissues except brain.

Its subcellular location is the secreted. Its function is as follows. Monokine with inflammatory, pyrogenic and chemokinetic properties. Circulates at high concentrations in the blood of healthy animals. Binding to a high-affinity receptor activates calcium release in neutrophils. It also inhibits colony formation of bone marrow myeloid immature progenitors. The polypeptide is C-C motif chemokine 9 (Ccl9) (Mus musculus (Mouse)).